A 1111-amino-acid polypeptide reads, in one-letter code: Nuclear migration and anchoring protein unc-84 (1111 aa).

Residues 1-509 (MAPATEADNN…LTDKKSSKFS (509 aa)) lie on the Nuclear side of the membrane. Required for nuclear envelope localization stretches follow at residues 118-244 (YILR…SQTL) and 503-507 (KKSSK). A disordered region spans residues 232-253 (ERASRMTTRSQTLERSRKFDGL). Residues 243–252 (TLERSRKFDG) are compositionally biased toward basic and acidic residues. Residues 510–530 (WCQILGLLLALLFAIFLLGFL) traverse the membrane as a helical segment. At 531–1111 (TSDNTAIRVK…LRVHGKVVQV (581 aa)) the chain is on the perinuclear space side. Positions 912–1111 (QYDKNHLEAI…LRVHGKVVQV (200 aa)) are interaction with zyg-12. Positions 945–1109 (GGAVVSTRCS…YRLRVHGKVV (165 aa)) constitute an SUN domain.

In terms of assembly, component of the unc-83-unc-84 LINC complex which contains at least unc-83 and unc-84. Within the unc-83-unc-84 LINC complex interacts (via C-terminus) with unc-83; the interaction is probably required to recruit unc-83 to the nuclear membrane. Most likely interacts with anc-1; the interaction is probably required to recruit anc-1 to the nuclear envelope. Interacts (via C-terminus) with zyg-12 (via C-terminus); the interaction is direct. May interact with lmn-1; this interaction may be required to complete the connection between the nuclear lamina and the cytoskeleton. As to expression, expressed in all somatic cells. Not expressed in germ cells in the mitotic and transition zones of the gonad. One study shows expression at the beginning of the late pachytene stage in the proximal gonad, but there is no expression in the male germline, suggesting expression is specific to oogenesis in hermaphrodites.

The protein localises to the nucleus inner membrane. It is found in the cytoplasm. It localises to the cytoskeleton. In terms of biological role, involved in nuclear migration and anchoring in hypodermal precursor cells. Most likely recruits anc-1 to the nuclear envelope where anc-1 functions to tether the nucleus to the actin cytoskeleton. Component of the unc-83-unc-84 LINC (LInker of Nucleoskeleton and Cytoskeleton) complex where it recruits and interacts with unc-83 to form a bridge connecting the nuclear envelope to the cytoskeleton which allows for nuclear transport along microtubules. Its role in nuclear migration may be in association with lamin, lmn-1. Regulates nuclear migrations in one-cell embryos, controlling the posterior migration of the male pronucleus following fertilization. Not required for centrosome attachment to the nucleus. Plays a role in the maintenance of the nuclear envelope architecture in body wall muscle cells. May be involved in DNA damage repair through an association with zyg-12. Potentially has roles in homologous recombination, double strand break repair and meiotic recombination. Specifically, may in part inhibit non-homologous end joining repair, most likely through recruiting fan-1 to the nucleoplasm, to facilitate the repair of DNA cross-links. The sequence is that of Nuclear migration and anchoring protein unc-84 from Caenorhabditis elegans.